Consider the following 361-residue polypeptide: Mitogen-activated protein kinase 14 (361 aa).

The 285-residue stretch at 32–316 folds into the Protein kinase domain; that stretch reads YVPIKPIGRG…VSDALLHPYM (285 aa). ATP is bound by residues 38–46 and Lys-61; that span reads IGRGAYGVV. Asp-158 functions as the Proton acceptor in the catalytic mechanism. Residue Thr-188 is modified to Phosphothreonine. A TXY motif is present at residues 188-190; the sequence is TEY. At Tyr-190 the chain carries Phosphotyrosine. Thr-193 carries the phosphothreonine modification.

It belongs to the protein kinase superfamily. CMGC Ser/Thr protein kinase family. MAP kinase subfamily. Interacts with MKK3. Post-translationally, dually phosphorylated on Thr-188 and Tyr-190, which activates the enzyme.

It carries out the reaction L-seryl-[protein] + ATP = O-phospho-L-seryl-[protein] + ADP + H(+). It catalyses the reaction L-threonyl-[protein] + ATP = O-phospho-L-threonyl-[protein] + ADP + H(+). Its activity is regulated as follows. Activated by threonine and tyrosine phosphorylation. The chain is Mitogen-activated protein kinase 14 (MPK14) from Arabidopsis thaliana (Mouse-ear cress).